A 189-amino-acid polypeptide reads, in one-letter code: MSIKSDKWIRRMAEQEGMIEPFEPGQIRYDSNNQKLVSYGTSSYGYDVRCAREFKIFTNVHSAVVDPKNFDEHSFVDISSDVCIIPPNSFALARTVEYFRIPRSVLTVCLGKSTYARCGIIVNVTPLEPEWEGHVTLEFSNTTPLPAKIYANEGIAQMLFFESDEICDTSYRDRGGKYQGQTGVTLPKT.

DCTP is bound by residues 112 to 117 (KSTYAR), 136 to 138 (TLE), Q157, Y171, and Q181. Catalysis depends on E138, which acts as the Proton donor/acceptor.

The protein belongs to the dCTP deaminase family. As to quaternary structure, homotrimer.

It catalyses the reaction dCTP + H2O + H(+) = dUTP + NH4(+). It participates in pyrimidine metabolism; dUMP biosynthesis; dUMP from dCTP (dUTP route): step 1/2. Functionally, catalyzes the deamination of dCTP to dUTP. This is dCTP deaminase from Teredinibacter turnerae (strain ATCC 39867 / T7901).